The primary structure comprises 137 residues: MSKVPRNFRLLEELEKGEKGFGPESCSYGLADSDDITMTKWNGTILGPPHSNHENRIYSLSIDCGPNYPDSPPKVTFISKINLPCVNPTTGEVQTDFHTLRDWKRAYTMETLLLDLRKEMATPANKKLRQPKEGETF.

One can recognise a UBC core domain in the interval 5–137; sequence PRNFRLLEEL…LRQPKEGETF (133 aa). Ser71 carries the phosphoserine modification.

Belongs to the ubiquitin-conjugating enzyme family. Heterodimer with UBC13.

Has a role in the DNA error-free postreplication repair (PRR) pathway. Lacks catalytic activity by itself. The UBC13/MMS2 heterodimer catalyzes the synthesis of non-canonical poly-ubiquitin chains that are linked through 'Lys-63'. In Saccharomyces cerevisiae (strain ATCC 204508 / S288c) (Baker's yeast), this protein is Ubiquitin-conjugating enzyme variant MMS2 (MMS2).